We begin with the raw amino-acid sequence, 411 residues long: RING-H2 finger protein ATL65 (411 aa).

A disordered region spans residues methionine 1–serine 32. The span at serine 10–serine 21 shows a compositional bias: low complexity. Residues leucine 36 to valine 56 form a helical membrane-spanning segment. The segment at cysteine 156 to arginine 198 adopts an RING-type; atypical zinc-finger fold.

Belongs to the RING-type zinc finger family. ATL subfamily.

Its subcellular location is the membrane. The enzyme catalyses S-ubiquitinyl-[E2 ubiquitin-conjugating enzyme]-L-cysteine + [acceptor protein]-L-lysine = [E2 ubiquitin-conjugating enzyme]-L-cysteine + N(6)-ubiquitinyl-[acceptor protein]-L-lysine.. Its pathway is protein modification; protein ubiquitination. The sequence is that of RING-H2 finger protein ATL65 (ATL65) from Arabidopsis thaliana (Mouse-ear cress).